Reading from the N-terminus, the 622-residue chain is Wall-associated receptor kinase-like 21 (622 aa).

An N-terminal signal peptide occupies residues 1 to 21 (MAETPQPYLIFVFFVFTLTVA). The Extracellular segment spans residues 22 to 247 (TQTTGSVKCK…LVYKRKGLHK (226 aa)). N-linked (GlcNAc...) asparagine glycosylation is found at Asn50, Asn114, Asn131, Asn160, and Asn195. Residues 248-268 (LVVLGTAGILVGVLVIVVLIA) traverse the membrane as a helical segment. The Cytoplasmic segment spans residues 269–622 (TYFFRNKQSA…MKRQQSFPRE (354 aa)). Residues 314-594 (FSDKNMLGTG…EITEDLHRIK (281 aa)) enclose the Protein kinase domain. Residues 320 to 328 (LGTGAYGTV) and Lys342 contribute to the ATP site. Asp439 functions as the Proton acceptor in the catalytic mechanism.

Belongs to the protein kinase superfamily. Ser/Thr protein kinase family.

Its subcellular location is the membrane. It catalyses the reaction L-seryl-[protein] + ATP = O-phospho-L-seryl-[protein] + ADP + H(+). The enzyme catalyses L-threonyl-[protein] + ATP = O-phospho-L-threonyl-[protein] + ADP + H(+). In terms of biological role, serine/threonine-protein kinase that may function as a signaling receptor of extracellular matrix component. The polypeptide is Wall-associated receptor kinase-like 21 (WAKL21) (Arabidopsis thaliana (Mouse-ear cress)).